Reading from the N-terminus, the 48-residue chain is Protein TUNAR (48 aa).

The segment at 1-20 is disordered; the sequence is MVITSGNDEDRGGQEKESKE. A compositionally biased stretch (basic and acidic residues) spans 8-20; it reads DEDRGGQEKESKE. Residues 24 to 44 form a helical membrane-spanning segment; it reads LAMLGIIGTILNLIVIIFVYI.

In terms of assembly, interacts with ATPase ATP2A2/SERCA2. Interacts with ATPase ATP2A3/SERCA3; the interaction occurs at low levels in low glucose conditions and is increased by high glucose levels. In the adult, expressed in Purkinje cells in the cerebellum, in motor neurons and interneurons in the spinal cord and in neurons of the cortex, hippocampus and thalamus (at protein level). Also detected in the developing cortex, hippocampus and thalamus at embryonic day E15.5 (at protein level).

It is found in the endoplasmic reticulum membrane. The protein resides in the extracellular vesicle membrane. Its function is as follows. In neurons, plays a role in the regulation of intracellular Ca(2+), possibly by acting as an activator of ATP2A2/SERCA2, thus increasing the efficiency with which Ca(2+) is removed from the cytoplasm. Inhibits differentiation of embryonic stem cells into neurons and inhibits neurite outgrowth, likely as a result of its role in intracellular Ca(2+) regulation. In pancreatic beta cells, lowers Ca(2+) levels in the endoplasmic reticulum and enhances glucose-stimulated insulin secretion. The chain is Protein TUNAR from Mus musculus (Mouse).